The sequence spans 194 residues: Potassium-transporting ATPase KdpC subunit (194 aa).

Residues 12–34 traverse the membrane as a helical segment; sequence LFLLLLTGGVYPLLTTALGQWWF.

It belongs to the KdpC family. The system is composed of three essential subunits: KdpA, KdpB and KdpC.

The protein localises to the cell inner membrane. Part of the high-affinity ATP-driven potassium transport (or Kdp) system, which catalyzes the hydrolysis of ATP coupled with the electrogenic transport of potassium into the cytoplasm. This subunit acts as a catalytic chaperone that increases the ATP-binding affinity of the ATP-hydrolyzing subunit KdpB by the formation of a transient KdpB/KdpC/ATP ternary complex. This Salmonella schwarzengrund (strain CVM19633) protein is Potassium-transporting ATPase KdpC subunit.